Reading from the N-terminus, the 261-residue chain is Type III pantothenate kinase (261 aa).

ATP is bound at residue 7–14 (EQGNTNTM). 108–111 (GADR) contacts substrate. Catalysis depends on aspartate 110, which acts as the Proton acceptor. Aspartate 130 is a K(+) binding site. Threonine 133 is an ATP binding site. Threonine 187 provides a ligand contact to substrate.

Belongs to the type III pantothenate kinase family. In terms of assembly, homodimer. It depends on NH4(+) as a cofactor. The cofactor is K(+).

The protein resides in the cytoplasm. It carries out the reaction (R)-pantothenate + ATP = (R)-4'-phosphopantothenate + ADP + H(+). It functions in the pathway cofactor biosynthesis; coenzyme A biosynthesis; CoA from (R)-pantothenate: step 1/5. In terms of biological role, catalyzes the phosphorylation of pantothenate (Pan), the first step in CoA biosynthesis. This Caulobacter vibrioides (strain ATCC 19089 / CIP 103742 / CB 15) (Caulobacter crescentus) protein is Type III pantothenate kinase.